We begin with the raw amino-acid sequence, 258 residues long: MLKRRIIPCLDVKAGRVVKGVAFLNHRDAGDPVELAAAYDAGGADELVFYDITASSDERAIMVDVVERTAAQVFIPLTVGGGLRTVEDMYRMLRAGADKVSINTAAVLNPQLIEDGARRFGSQCIVLSIDARRVNASDEPPRWQVFTHTGRDPRPTGLDAIEWARRGVELGAGEIVINSMDEDGVGGGYDIDLLRAITEAVNVPVIASGGVGSPEHMYAGLVEGRADAVLAASIFHFGAYTIRDVKQYLAERGVPVRL.

Catalysis depends on residues aspartate 11 and aspartate 130.

Belongs to the HisA/HisF family. Heterodimer of HisH and HisF.

It localises to the cytoplasm. It catalyses the reaction 5-[(5-phospho-1-deoxy-D-ribulos-1-ylimino)methylamino]-1-(5-phospho-beta-D-ribosyl)imidazole-4-carboxamide + L-glutamine = D-erythro-1-(imidazol-4-yl)glycerol 3-phosphate + 5-amino-1-(5-phospho-beta-D-ribosyl)imidazole-4-carboxamide + L-glutamate + H(+). The protein operates within amino-acid biosynthesis; L-histidine biosynthesis; L-histidine from 5-phospho-alpha-D-ribose 1-diphosphate: step 5/9. In terms of biological role, IGPS catalyzes the conversion of PRFAR and glutamine to IGP, AICAR and glutamate. The HisF subunit catalyzes the cyclization activity that produces IGP and AICAR from PRFAR using the ammonia provided by the HisH subunit. This chain is Imidazole glycerol phosphate synthase subunit HisF, found in Roseiflexus sp. (strain RS-1).